A 95-amino-acid polypeptide reads, in one-letter code: Acylphosphatase (95 aa).

In terms of domain architecture, Acylphosphatase-like spans 5–93; the sequence is RAHVFIRGKV…GEFKDFKILP (89 aa). Residues R20 and N38 contribute to the active site.

It belongs to the acylphosphatase family.

The enzyme catalyses an acyl phosphate + H2O = a carboxylate + phosphate + H(+). This is Acylphosphatase (acyP) from Pyrobaculum aerophilum (strain ATCC 51768 / DSM 7523 / JCM 9630 / CIP 104966 / NBRC 100827 / IM2).